The sequence spans 103 residues: PTS system oligo-beta-mannoside-specific EIIB component (103 aa).

Residues 1-103 (MKKILLACSS…EQALSLMVNQ (103 aa)) enclose the PTS EIIB type-3 domain. Cysteine 8 (phosphocysteine intermediate) is an active-site residue. Cysteine 8 bears the Phosphocysteine; by EIIA mark.

It localises to the cytoplasm. It catalyses the reaction D-cellobiose(out) + N(pros)-phospho-L-histidyl-[protein] = 6-phospho-beta-D-glucosyl-(1-&gt;4)-D-glucose(in) + L-histidyl-[protein]. Functionally, the phosphoenolpyruvate-dependent sugar phosphotransferase system (sugar PTS), a major carbohydrate active transport system, catalyzes the phosphorylation of incoming sugar substrates concomitantly with their translocation across the cell membrane. The enzyme II GmuABC PTS system is involved in the transport of oligo-glucomannans such as cellobiose or mannobiose. This is PTS system oligo-beta-mannoside-specific EIIB component from Bacillus subtilis (strain 168).